The following is a 295-amino-acid chain: Acetylglutamate kinase (295 aa).

Residues Gly-66–Gly-67, Arg-88, and Asn-193 each bind substrate.

The protein belongs to the acetylglutamate kinase family. ArgB subfamily.

The protein resides in the cytoplasm. The enzyme catalyses N-acetyl-L-glutamate + ATP = N-acetyl-L-glutamyl 5-phosphate + ADP. The protein operates within amino-acid biosynthesis; L-arginine biosynthesis; N(2)-acetyl-L-ornithine from L-glutamate: step 2/4. Its function is as follows. Catalyzes the ATP-dependent phosphorylation of N-acetyl-L-glutamate. This Rhizobium etli (strain CIAT 652) protein is Acetylglutamate kinase.